The chain runs to 157 residues: Tripartite terminase subunit 2 (157 aa).

The segment at 1–69 is disordered; the sequence is MSWAKQRVPF…DGEDGHALPD (69 aa). Residues 11–27 are compositionally biased toward acidic residues; that stretch reads LDDDDGEEENDVQDDVD.

The protein belongs to the herpesviridae TRM2 protein family. As to quaternary structure, associates with TRM1 and TRM3 to form the tripartite terminase complex.

The protein localises to the host nucleus. Its function is as follows. Component of the molecular motor that translocates viral genomic DNA in empty capsid during DNA packaging. Forms a tripartite terminase complex together with TRM1 and TRM3 in the host cytoplasm. Once the complex reaches the host nucleus, it interacts with the capsid portal vertex. This portal forms a ring in which genomic DNA is translocated into the capsid. In Homo sapiens (Human), this protein is Tripartite terminase subunit 2.